Reading from the N-terminus, the 436-residue chain is Tol-Pal system protein TolB (436 aa).

The first 28 residues, 1-28 (MMKCSFFRAILVAVGLMAAAVVATPANA), serve as a signal peptide directing secretion.

It belongs to the TolB family. In terms of assembly, the Tol-Pal system is composed of five core proteins: the inner membrane proteins TolA, TolQ and TolR, the periplasmic protein TolB and the outer membrane protein Pal. They form a network linking the inner and outer membranes and the peptidoglycan layer.

Its subcellular location is the periplasm. Its function is as follows. Part of the Tol-Pal system, which plays a role in outer membrane invagination during cell division and is important for maintaining outer membrane integrity. The chain is Tol-Pal system protein TolB from Rhizobium etli (strain CIAT 652).